The primary structure comprises 370 residues: Probable phosphoserine aminotransferase (370 aa).

Arginine 45 is an L-glutamate binding site. Pyridoxal 5'-phosphate is bound by residues 79-80 (GT), tryptophan 105, threonine 154, aspartate 175, and glutamine 198. Lysine 199 is modified (N6-(pyridoxal phosphate)lysine). 240–241 (NT) contacts pyridoxal 5'-phosphate.

This sequence belongs to the class-V pyridoxal-phosphate-dependent aminotransferase family. SerC subfamily. In terms of assembly, homodimer. The cofactor is pyridoxal 5'-phosphate.

The catalysed reaction is O-phospho-L-serine + 2-oxoglutarate = 3-phosphooxypyruvate + L-glutamate. It carries out the reaction 4-(phosphooxy)-L-threonine + 2-oxoglutarate = (R)-3-hydroxy-2-oxo-4-phosphooxybutanoate + L-glutamate. The protein operates within amino-acid biosynthesis; L-serine biosynthesis; L-serine from 3-phospho-D-glycerate: step 2/3. It functions in the pathway cofactor biosynthesis; pyridoxine 5'-phosphate biosynthesis; pyridoxine 5'-phosphate from D-erythrose 4-phosphate: step 3/5. Catalyzes the reversible conversion of 3-phosphohydroxypyruvate to phosphoserine and of 3-hydroxy-2-oxo-4-phosphonooxybutanoate to phosphohydroxythreonine. The polypeptide is Probable phosphoserine aminotransferase (Caenorhabditis elegans).